The primary structure comprises 197 residues: RNA-binding protein with multiple splicing (197 aa).

Methionine 1 bears the N-acetylmethionine mark. At threonine 12 the chain carries Phosphothreonine. The RRM domain occupies 24-101 (RTLFVSGLPL…QTLRLEFAKA (78 aa)). The tract at residues 98–105 (FAKANTKM) is interaction with RNA. Threonine 113 bears the Phosphothreonine mark.

In terms of assembly, homodimer; each protein chain binds one RNA molecule via the external surface of the homodimer. Interacts with RNA binding proteins MBNL1, RBFOX2, RBM4 and RBM14; the interaction allows cooperative assembly of stable cell-specific alternative splicing regulatory complexes. Also interacts with RBM47, MATR3 and ESRP2. Interacts with SMAD2, SMAD3 and SMAD4; the interactions are direct. MRNA expressed in developing heart, with significantly higher expression in the atria relative to the ventricles.

Its subcellular location is the nucleus. It is found in the cytoplasm. It localises to the stress granule. The protein resides in the P-body. RNA binding protein that mediates the regulation of pre-mRNA alternative splicing (AS). Acts either as activator (FLNB, HSPG2, LIPA1, MYOCD, PTPRF and PPFIBP1) or repressor (TPM1, ACTN1, ITGA7, PIEZO1, LSM14B, MBNL1 and MBML2) of splicing events on specific pre-mRNA targets. Together with RNA binding proteins RBFOX2 and MBNL1/2, activates a splicing program associated with differentiated contractile vascular smooth muscle cells (SMC) by regulating AS of numerous pre-mRNA involved in actin cytoskeleton and focal adhesion machineries, suggesting a role in promoting a cell differentiated state. Binds to introns, exons and 3'-UTR associated with tandem CAC trinucleotide motifs separated by a variable spacer region, at a minimum as a dimer. The minimal length of RNA required for RBPMS-binding tandem CAC motifs is 15 nt, with spacing ranging from 1 to 9 nt. Can also bind to CA dinucleotide repeats. Mediates repression of TPM1 exon 3 by binding to CAC tandem repeats in the flanking intronic regions, followed by higher-order oligomerization and heterotypic interactions with other splicing regulators including MBNL1 and RBFOX2, which prevents assembly of ATP-dependent splicing complexes. The protein is RNA-binding protein with multiple splicing of Mus musculus (Mouse).